The sequence spans 235 residues: uncharacterized protein (235 aa).

Disordered stretches follow at residues 60–96 (SSNR…QKKT) and 192–235 (LNTS…YDSF). Positions 80-93 (SFQNMNSSMPSSTQ) are enriched in polar residues. Over residues 197-214 (SEDDTESIVETDYSEEEK) the composition is skewed to acidic residues.

It belongs to the asfivirus DP238L family.

This is an uncharacterized protein from Ornithodoros (relapsing fever ticks).